Here is a 91-residue protein sequence, read N- to C-terminus: MFCVIYRSARREQTYLYVEKKDDFSRVPEELLAGFGQPIMTMMLPLDGRKKLANADLEKVKQALKDQGYYLQLPPPPENLLKQHLESIGKK.

Residues 1–85 (MFCVIYRSAR…PPENLLKQHL (85 aa)) form the YcgL domain.

The sequence is that of YcgL domain-containing protein ESA_01460 from Cronobacter sakazakii (strain ATCC BAA-894) (Enterobacter sakazakii).